A 2230-amino-acid polypeptide reads, in one-letter code: DNA polymerase epsilon catalytic subunit A (2230 aa).

The span at 1–19 (MPTRQPSKYGNKFRSSSAS) shows a compositional bias: polar residues. The disordered stretch occupies residues 1–24 (MPTRQPSKYGNKFRSSSASFKPKR). Positions 2101, 2104, 2136, and 2139 each coordinate Zn(2+). Residues 2101–2139 (CNACCLIRDLDLCRDEDVLPEMGSDPNKAAPKPWRCPFC) form a CysA-type zinc finger. [4Fe-4S] cluster is bound by residues Cys-2170, Cys-2173, Cys-2185, and Cys-2187. Residues 2170-2187 (CSKCGGLKISDFMEHCSC) carry the CysB motif motif.

This sequence belongs to the DNA polymerase type-B family. In terms of assembly, heterotetramer. Consists of 4 subunits: pol2, dpb2, dpb3 and dpb4. The cofactor is [4Fe-4S] cluster.

Its subcellular location is the nucleus. The catalysed reaction is DNA(n) + a 2'-deoxyribonucleoside 5'-triphosphate = DNA(n+1) + diphosphate. Its function is as follows. DNA polymerase II participates in chromosomal DNA replication. The chain is DNA polymerase epsilon catalytic subunit A (pol2) from Aspergillus fumigatus (strain ATCC MYA-4609 / CBS 101355 / FGSC A1100 / Af293) (Neosartorya fumigata).